We begin with the raw amino-acid sequence, 326 residues long: Phospho-N-acetylmuramoyl-pentapeptide-transferase (326 aa).

Transmembrane regions (helical) follow at residues 3–23 (ISISAGIVTFLLTLVGIPAFI), 51–71 (TMGGLVFLITSVLVAFFFALF), 79–99 (VGMILFILVLYGLVGFLDDFL), 115–135 (LALQLLGGVIFYLFYERGGDI), 138–158 (VFGYPVHLGFFYIFFALFWLV), 169–189 (GVDGLASISVVISLFAYGVIA), 195–215 (MDILLVILAMIGGLLGFFIFN), 221–243 (VFMGDVGSLALGGMLAAISMALH), and 306–326 (FFFWGVGLLASLLTLAILYLM).

The protein belongs to the glycosyltransferase 4 family. MraY subfamily. Requires Mg(2+) as cofactor.

The protein resides in the cell membrane. It carries out the reaction UDP-N-acetyl-alpha-D-muramoyl-L-alanyl-gamma-D-glutamyl-L-lysyl-D-alanyl-D-alanine + di-trans,octa-cis-undecaprenyl phosphate = Mur2Ac(oyl-L-Ala-gamma-D-Glu-L-Lys-D-Ala-D-Ala)-di-trans,octa-cis-undecaprenyl diphosphate + UMP. The protein operates within cell wall biogenesis; peptidoglycan biosynthesis. Functionally, catalyzes the initial step of the lipid cycle reactions in the biosynthesis of the cell wall peptidoglycan: transfers peptidoglycan precursor phospho-MurNAc-pentapeptide from UDP-MurNAc-pentapeptide onto the lipid carrier undecaprenyl phosphate, yielding undecaprenyl-pyrophosphoryl-MurNAc-pentapeptide, known as lipid I. In Streptococcus pneumoniae serotype 2 (strain D39 / NCTC 7466), this protein is Phospho-N-acetylmuramoyl-pentapeptide-transferase.